Reading from the N-terminus, the 512-residue chain is Aldehyde dehydrogenase B (512 aa).

Catalysis depends on residues Glu268 and Cys307.

In terms of assembly, homotetramer.

It catalyses the reaction an aldehyde + NADP(+) + H2O = a carboxylate + NADPH + 2 H(+). The enzyme catalyses acetaldehyde + NADP(+) + H2O = acetate + NADPH + 2 H(+). It carries out the reaction chloroacetaldehyde + NADP(+) + H2O = chloroacetate + NADPH + 2 H(+). The catalysed reaction is propanal + NADP(+) + H2O = propanoate + NADPH + 2 H(+). With respect to regulation, magnesium increases enzyme activity with various substrates. Functionally, catalyzes the NADP(+)-dependent oxidation of diverse aldehydes to their corresponding carboxylic acids, with a preference for acetaldehyde and chloroacetaldehyde. May play a role in detoxifying aldehydes present during stationary phase. Cannot use NAD(+) instead of NADP(+) as the electron acceptor. To a lesser extent is also able to oxidize propionaldehyde (propanal), benzaldehyde, mafosfamide, and 4-hydroperoxycyclophosphamide. Does not use either glyceraldehyde or glycolaldehyde as substrates. The chain is Aldehyde dehydrogenase B from Escherichia coli (strain K12).